The primary structure comprises 141 residues: Hemoglobin subunit alpha (141 aa).

The region spanning 1 to 141 is the Globin domain; that stretch reads VLSPADKTNI…VSTVLTSKYR (141 aa). Serine 3 bears the Phosphoserine mark. Position 7 is an N6-succinyllysine (lysine 7). Threonine 8 is modified (phosphothreonine). Lysine 11 carries the N6-succinyllysine modification. Lysine 16 carries the N6-acetyllysine; alternate modification. An N6-succinyllysine; alternate modification is found at lysine 16. A Phosphotyrosine modification is found at tyrosine 24. Residue serine 35 is modified to Phosphoserine. Lysine 40 carries the N6-succinyllysine modification. Residue serine 49 is modified to Phosphoserine. Histidine 58 serves as a coordination point for O2. Histidine 87 lines the heme b pocket. At serine 102 the chain carries Phosphoserine. Threonine 108 is modified (phosphothreonine). Phosphoserine is present on serine 124. 2 positions are modified to phosphothreonine: threonine 134 and threonine 137. Residue serine 138 is modified to Phosphoserine.

This sequence belongs to the globin family. In terms of assembly, heterotetramer of two alpha chains and two beta chains. As to expression, red blood cells.

In terms of biological role, involved in oxygen transport from the lung to the various peripheral tissues. Hemopressin acts as an antagonist peptide of the cannabinoid receptor CNR1. Hemopressin-binding efficiently blocks cannabinoid receptor CNR1 and subsequent signaling. The polypeptide is Hemoglobin subunit alpha (HBA) (Vulpes vulpes (Red fox)).